The sequence spans 159 residues: Urease subunit beta 2 (159 aa).

A disordered region spans residues 1-23; it reads MAKEPTEAAHPQPEQTKTNHKAH.

Belongs to the urease beta subunit family. Heterotrimer of UreA (gamma), UreB (beta) and UreC (alpha) subunits. Three heterotrimers associate to form the active enzyme.

Its subcellular location is the cytoplasm. The catalysed reaction is urea + 2 H2O + H(+) = hydrogencarbonate + 2 NH4(+). The protein operates within nitrogen metabolism; urea degradation; CO(2) and NH(3) from urea (urease route): step 1/1. The polypeptide is Urease subunit beta 2 (Brucella abortus biovar 1 (strain 9-941)).